The primary structure comprises 256 residues: UPF0246 protein Bpet1601 (256 aa).

The protein belongs to the UPF0246 family.

The protein is UPF0246 protein Bpet1601 of Bordetella petrii (strain ATCC BAA-461 / DSM 12804 / CCUG 43448).